A 1140-amino-acid chain; its full sequence is Kinesin-like protein KIN-14O (1140 aa).

Over residues 1–12 (MLESEFQREHAF) the composition is skewed to basic and acidic residues. 4 disordered regions span residues 1-37 (MLESEFQREHAFESATEQELTCPISDNLHESVEADDD), 50-81 (NPAESCESEEIQTKALPSSSSGQDLVASDEDS), 161-217 (SPGS…GGHK), and 323-347 (ASGTSEENETEKSKLEEKKKDKEED). The span at 161–179 (SPGSSHGGSTPRSPFSPSS) shows a compositional bias: low complexity. Over residues 180-193 (PRERHNKGLADSRF) the composition is skewed to basic and acidic residues. Residues 197 to 209 (LPNSSALDPSSPG) are compositionally biased toward polar residues. Residues 327–546 (SEENETEKSK…KAKEMEEKSE (220 aa)) are a coiled coil. Residues 332 to 347 (TEKSKLEEKKKDKEED) are compositionally biased toward basic and acidic residues. The 321-residue stretch at 632 to 952 (NIRVYCRVRP…LKFAERVSGV (321 aa)) folds into the Kinesin motor domain. Position 716-723 (716-723 (GQTGSGKT)) interacts with ATP. Over residues 1002-1018 (LGQSDDFNSEAGDSQLS) the composition is skewed to polar residues. Disordered regions lie at residues 1002 to 1021 (LGQSDDFNSEAGDSQLSIED) and 1028 to 1140 (DYTR…KRWS). Basic and acidic residues predominate over residues 1066–1078 (EGRKPLKISDKPK). A compositionally biased stretch (polar residues) spans 1099–1130 (TMRTTNIAKATSALLSPSSQGMKKTGSASNFL).

The protein belongs to the TRAFAC class myosin-kinesin ATPase superfamily. Kinesin family. KIN-14 subfamily.

This is Kinesin-like protein KIN-14O from Arabidopsis thaliana (Mouse-ear cress).